A 355-amino-acid chain; its full sequence is Cyclin-D1-binding protein 1 (355 aa).

Alanine 2 is modified (N-acetylalanine). 2 interaction with TCF3 regions span residues alanine 2–valine 181 and isoleucine 147–leucine 355. An interaction with RPLP0 region spans residues alanine 2 to glutamate 187. Residues alanine 2 to serine 205 are required for interaction with CCND1. Residues aspartate 203–arginine 224 form a disordered region. The segment at leucine 235–leucine 355 is interaction with RPLP0.

The protein belongs to the CCNDBP1 family. Interacts with CCND1 and GRAP2. May also interact with COPS5, RPLP0, SIRT6, SYF2 and TCF3. In terms of processing, phosphorylated.

It is found in the cytoplasm. Its subcellular location is the nucleus. Its function is as follows. May negatively regulate cell cycle progression. May act at least in part via inhibition of the cyclin-D1/CDK4 complex, thereby preventing phosphorylation of RB1 and blocking E2F-dependent transcription. The polypeptide is Cyclin-D1-binding protein 1 (Ccndbp1) (Rattus norvegicus (Rat)).